The sequence spans 266 residues: Glucosamine-6-phosphate deaminase (266 aa).

The active-site Proton acceptor; for enolization step is the aspartate 72. Aspartate 141 functions as the For ring-opening step in the catalytic mechanism. Histidine 143 functions as the Proton acceptor; for ring-opening step in the catalytic mechanism. Residue glutamate 148 is the For ring-opening step of the active site.

The protein belongs to the glucosamine/galactosamine-6-phosphate isomerase family. NagB subfamily. In terms of assembly, homohexamer.

It catalyses the reaction alpha-D-glucosamine 6-phosphate + H2O = beta-D-fructose 6-phosphate + NH4(+). The protein operates within amino-sugar metabolism; N-acetylneuraminate degradation; D-fructose 6-phosphate from N-acetylneuraminate: step 5/5. Its activity is regulated as follows. Allosterically activated by N-acetylglucosamine 6-phosphate (GlcNAc6P). In terms of biological role, catalyzes the reversible isomerization-deamination of glucosamine 6-phosphate (GlcN6P) to form fructose 6-phosphate (Fru6P) and ammonium ion. The polypeptide is Glucosamine-6-phosphate deaminase (Pectobacterium atrosepticum (strain SCRI 1043 / ATCC BAA-672) (Erwinia carotovora subsp. atroseptica)).